A 306-amino-acid polypeptide reads, in one-letter code: Glutaminase (306 aa).

7 residues coordinate substrate: S64, N115, E159, N166, Y190, Y242, and V260.

Belongs to the glutaminase family. Homotetramer.

It carries out the reaction L-glutamine + H2O = L-glutamate + NH4(+). In Vibrio atlanticus (strain LGP32) (Vibrio splendidus (strain Mel32)), this protein is Glutaminase.